The primary structure comprises 424 residues: L-glutamine:2-deoxy-scyllo-inosose aminotransferase (424 aa).

K202 carries the post-translational modification N6-(pyridoxal phosphate)lysine.

This sequence belongs to the DegT/DnrJ/EryC1 family. L-glutamine:2-deoxy-scyllo-inosose/scyllo-inosose aminotransferase subfamily. Pyridoxal 5'-phosphate serves as cofactor.

It carries out the reaction 2-deoxy-L-scyllo-inosose + L-glutamine = 2-deoxy-scyllo-inosamine + 2-oxoglutaramate. The enzyme catalyses 3-amino-2,3-dideoxy-scyllo-inosose + L-glutamine = 2-deoxystreptamine + 2-oxoglutaramate. It functions in the pathway metabolic intermediate biosynthesis; 2-deoxystreptamine biosynthesis; 2-deoxystreptamine from D-glucose 6-phosphate: step 2/4. The protein operates within antibiotic biosynthesis; tobramycin biosynthesis. Its function is as follows. Catalyzes the PLP-dependent transamination of 2-deoxy-scyllo-inosose (2-DOI) to form 2-deoxy-scyllo-inosamine (2-DOIA) using L-glutamine as the amino donor. Also catalyzes the transamination of 3-amino-2,3-dideoxy-scyllo-inosose (keto-2-DOIA) into 2-deoxystreptamine (2-DOS). This is L-glutamine:2-deoxy-scyllo-inosose aminotransferase (tbmB) from Streptoalloteichus tenebrarius (strain ATCC 17920 / DSM 40477 / JCM 4838 / CBS 697.72 / NBRC 16177 / NCIMB 11028 / NRRL B-12390 / A12253. 1 / ISP 5477) (Streptomyces tenebrarius).